Reading from the N-terminus, the 124-residue chain is Large ribosomal subunit protein bL12 (124 aa).

It belongs to the bacterial ribosomal protein bL12 family. In terms of assembly, homodimer. Part of the ribosomal stalk of the 50S ribosomal subunit. Forms a multimeric L10(L12)X complex, where L10 forms an elongated spine to which 2 to 4 L12 dimers bind in a sequential fashion. Binds GTP-bound translation factors.

Forms part of the ribosomal stalk which helps the ribosome interact with GTP-bound translation factors. Is thus essential for accurate translation. This is Large ribosomal subunit protein bL12 from Liberibacter africanus subsp. capensis.